A 147-amino-acid chain; its full sequence is Large ribosomal subunit protein uL16 (147 aa).

The disordered stretch occupies residues 1–20 (MLMPKKVKHRKVQRGRMKGK).

This sequence belongs to the universal ribosomal protein uL16 family. As to quaternary structure, part of the 50S ribosomal subunit.

Binds 23S rRNA and is also seen to make contacts with the A and possibly P site tRNAs. The sequence is that of Large ribosomal subunit protein uL16 from Clostridium kluyveri (strain ATCC 8527 / DSM 555 / NBRC 12016 / NCIMB 10680 / K1).